Consider the following 299-residue polypeptide: Large ribosomal subunit protein eL22 (299 aa).

Disordered stretches follow at residues 1–142 and 155–178; these read MAPT…AAPA and VAKP…KKNV. 2 stretches are compositionally biased toward basic and acidic residues: residues 33 to 42 and 55 to 64; these read GKVEKPKAEA and KASEAAKDVK. 2 stretches are compositionally biased toward low complexity: residues 65–98 and 105–142; these read AAAA…AAAA and AAAA…AAPA.

This sequence belongs to the eukaryotic ribosomal protein eL22 family.

In Drosophila melanogaster (Fruit fly), this protein is Large ribosomal subunit protein eL22 (RpL22).